The chain runs to 921 residues: Sodium/calcium exchanger 2 (921 aa).

Positions 1 to 20 (MAPLALMGVVLLLGVPHCLG) are cleaved as a signal peptide. Residues 23–42 (TPTPSLPPPTANDSDASPEG) form a disordered region. Residues 69–89 (VARAVVYFVAMVYMFLGVSII) traverse the membrane as a helical segment. N-linked (GlcNAc...) asparagine glycans are attached at residues asparagine 125 and asparagine 130. Helical transmembrane passes span 131–151 (LTLMALGSSAPEILLTVIEVC), 165–185 (IVGSAAFNMFVVIAVCVYVIP), 197–217 (VFFVTASWSIFAYVWLYLILA), and 226–246 (VWEALLTLIFFPVCVVFAWMA). Residues 248-267 (KRLLFYKYVYKRYRTDPRSG) form a putative calmodulin-binding region region. A disordered region spans residues 371–391 (HAADAARRPGATDGAPDDEDD). Calx-beta domains are found at residues 389-482 (EDDG…FVRL) and 512-611 (ATVT…FIEL). Positions 407, 443, 468, 469, 471, 473, 476, 518, 519, 520, 536, 598, 599, and 600 each coordinate Ca(2+). Serine 622 bears the Phosphoserine mark. Residue glutamate 665 participates in Ca(2+) binding. Helical transmembrane passes span 721–741 (CFDYVMHFLTVFWKVLFACVP), 749–769 (WACFGVCILVIGVLTALIGDL), 786–806 (VVFVALGTSIPDTFASKVAAL), 823–843 (AVNVFLGLGVAWSVAAVYWAV), 855–875 (LAFSVTLFTVFAFVCIAVLLY), and 893–913 (LATTALFLGLWFLYILFSSLE).

The protein belongs to the Ca(2+):cation antiporter (CaCA) (TC 2.A.19) family. SLC8 subfamily. As to expression, detected in kidney cortex, in distal convoluted tubules and connecting segments. Detected in brain and spinal cord (at protein level). Detected in brain, especially in hippocampus CA1, CA2 and CA3 fiels, dentate gyrus, cerebellum and brain cortex.

Its subcellular location is the cell membrane. The protein localises to the basolateral cell membrane. The enzyme catalyses Ca(2+)(in) + 3 Na(+)(out) = Ca(2+)(out) + 3 Na(+)(in). Calcium transport is down-regulated by Na(+) and stimulated by Ca(2+). Functionally, mediates the electrogenic exchange of Ca(2+) against Na(+) ions across the cell membrane, and thereby contributes to the regulation of cytoplasmic Ca(2+) levels and Ca(2+)-dependent cellular processes. Contributes to cellular Ca(2+) homeostasis in excitable cells. Contributes to the rapid decrease of cytoplasmic Ca(2+) levels back to baseline after neuronal activation, and thereby contributes to modulate synaptic plasticity, learning and memory. Plays a role in regulating urinary Ca(2+) and Na(+) excretion. This Mus musculus (Mouse) protein is Sodium/calcium exchanger 2.